The following is a 414-amino-acid chain: Gamma-glutamyl phosphate reductase (414 aa).

Belongs to the gamma-glutamyl phosphate reductase family.

The protein localises to the cytoplasm. The enzyme catalyses L-glutamate 5-semialdehyde + phosphate + NADP(+) = L-glutamyl 5-phosphate + NADPH + H(+). It functions in the pathway amino-acid biosynthesis; L-proline biosynthesis; L-glutamate 5-semialdehyde from L-glutamate: step 2/2. Its function is as follows. Catalyzes the NADPH-dependent reduction of L-glutamate 5-phosphate into L-glutamate 5-semialdehyde and phosphate. The product spontaneously undergoes cyclization to form 1-pyrroline-5-carboxylate. This chain is Gamma-glutamyl phosphate reductase, found in Xanthomonas axonopodis pv. citri (strain 306).